We begin with the raw amino-acid sequence, 249 residues long: MPAPTPKRADGRGATELRPFSVDWDPMSFALSSLIVRTGRTAVLCSVSLEEDVPRWRRGNGCGWLSAEYRLLPGSTPQRQSRELMKLSGRTQEIQRLIGRSLRAVLDMDALGERTLLIDCDVIQADAGTRTASITGAWIALRRACDLLRSQGVLTQDPIRQQLAAVSVGLIDGTPLLDLDYSEDSRADVDLNVVTAGDGRLLELQGTAEQAPFSRSELDAMLNLAESGLQELMQGQRHALATAAGSAIS.

Phosphate-binding positions include Arg90 and Gly128–Arg130.

Belongs to the RNase PH family. In terms of assembly, homohexameric ring arranged as a trimer of dimers.

It carries out the reaction tRNA(n+1) + phosphate = tRNA(n) + a ribonucleoside 5'-diphosphate. Phosphorolytic 3'-5' exoribonuclease that plays an important role in tRNA 3'-end maturation. Removes nucleotide residues following the 3'-CCA terminus of tRNAs; can also add nucleotides to the ends of RNA molecules by using nucleoside diphosphates as substrates, but this may not be physiologically important. Probably plays a role in initiation of 16S rRNA degradation (leading to ribosome degradation) during starvation. In Parasynechococcus marenigrum (strain WH8102), this protein is Ribonuclease PH.